A 275-amino-acid chain; its full sequence is NH(3)-dependent NAD(+) synthetase (275 aa).

46–53 contacts ATP; that stretch reads GISGGQDS. D52 contributes to the Mg(2+) binding site. R140 is a binding site for deamido-NAD(+). Residue T160 coordinates ATP. Residue E165 participates in Mg(2+) binding. Residues K173 and D180 each coordinate deamido-NAD(+). Residues K189 and T211 each contribute to the ATP site. 260–261 is a deamido-NAD(+) binding site; sequence HK.

This sequence belongs to the NAD synthetase family. As to quaternary structure, homodimer.

The enzyme catalyses deamido-NAD(+) + NH4(+) + ATP = AMP + diphosphate + NAD(+) + H(+). The protein operates within cofactor biosynthesis; NAD(+) biosynthesis; NAD(+) from deamido-NAD(+) (ammonia route): step 1/1. Its function is as follows. Catalyzes the ATP-dependent amidation of deamido-NAD to form NAD. Uses ammonia as a nitrogen source. The protein is NH(3)-dependent NAD(+) synthetase of Salmonella arizonae (strain ATCC BAA-731 / CDC346-86 / RSK2980).